The following is a 130-amino-acid chain: Holo-[acyl-carrier-protein] synthase (130 aa).

Mg(2+)-binding residues include Asp9 and Glu58.

This sequence belongs to the P-Pant transferase superfamily. AcpS family. Requires Mg(2+) as cofactor.

It is found in the cytoplasm. It carries out the reaction apo-[ACP] + CoA = holo-[ACP] + adenosine 3',5'-bisphosphate + H(+). Its function is as follows. Transfers the 4'-phosphopantetheine moiety from coenzyme A to a Ser of acyl-carrier-protein. The protein is Holo-[acyl-carrier-protein] synthase of Mycobacterium bovis (strain ATCC BAA-935 / AF2122/97).